The following is a 340-amino-acid chain: GTPase Obg (340 aa).

The Obg domain occupies 1–159 (MDFIDEVKLY…KYVVLKLKVL (159 aa)). Residues 160–329 (SDVGIIGMPN…LNEKLKKGSS (170 aa)) form the OBG-type G domain. GTP contacts are provided by residues 166-173 (GMPNAGKS), 191-195 (FTTIK), 212-215 (DIPG), 279-282 (NKCD), and 310-312 (GED). Mg(2+)-binding residues include Ser173 and Thr193.

It belongs to the TRAFAC class OBG-HflX-like GTPase superfamily. OBG GTPase family. Monomer. The cofactor is Mg(2+).

The protein localises to the cytoplasm. An essential GTPase which binds GTP, GDP and possibly (p)ppGpp with moderate affinity, with high nucleotide exchange rates and a fairly low GTP hydrolysis rate. Plays a role in control of the cell cycle, stress response, ribosome biogenesis and in those bacteria that undergo differentiation, in morphogenesis control. In Wolbachia sp. subsp. Brugia malayi (strain TRS), this protein is GTPase Obg.